Here is a 447-residue protein sequence, read N- to C-terminus: Phosphoglucosamine mutase (447 aa).

Ser102 acts as the Phosphoserine intermediate in catalysis. Positions 102, 241, 243, and 245 each coordinate Mg(2+). Ser102 is subject to Phosphoserine.

The protein belongs to the phosphohexose mutase family. Requires Mg(2+) as cofactor. Post-translationally, activated by phosphorylation.

It catalyses the reaction alpha-D-glucosamine 1-phosphate = D-glucosamine 6-phosphate. In terms of biological role, catalyzes the conversion of glucosamine-6-phosphate to glucosamine-1-phosphate. This Ruegeria sp. (strain TM1040) (Silicibacter sp.) protein is Phosphoglucosamine mutase.